The chain runs to 451 residues: UDP-N-acetylmuramoylalanine--D-glutamate ligase (451 aa).

Residue 119 to 125 coordinates ATP; the sequence is GSNGKTT.

It belongs to the MurCDEF family.

Its subcellular location is the cytoplasm. The catalysed reaction is UDP-N-acetyl-alpha-D-muramoyl-L-alanine + D-glutamate + ATP = UDP-N-acetyl-alpha-D-muramoyl-L-alanyl-D-glutamate + ADP + phosphate + H(+). Its pathway is cell wall biogenesis; peptidoglycan biosynthesis. Cell wall formation. Catalyzes the addition of glutamate to the nucleotide precursor UDP-N-acetylmuramoyl-L-alanine (UMA). This Bacillus cytotoxicus (strain DSM 22905 / CIP 110041 / 391-98 / NVH 391-98) protein is UDP-N-acetylmuramoylalanine--D-glutamate ligase.